A 210-amino-acid polypeptide reads, in one-letter code: Probable GTP-binding protein EngB (210 aa).

In terms of domain architecture, EngB-type G spans 24–199 (QGCEVAFAGR…WEVLGRWLDL (176 aa)). GTP is bound by residues 32–39 (GRSNAGKS), 59–63 (GRTRM), 77–80 (DLPG), 144–147 (TKSD), and 178–180 (FSS). Positions 39 and 61 each coordinate Mg(2+).

The protein belongs to the TRAFAC class TrmE-Era-EngA-EngB-Septin-like GTPase superfamily. EngB GTPase family. It depends on Mg(2+) as a cofactor.

In terms of biological role, necessary for normal cell division and for the maintenance of normal septation. This is Probable GTP-binding protein EngB from Methylococcus capsulatus (strain ATCC 33009 / NCIMB 11132 / Bath).